Consider the following 89-residue polypeptide: Small ribosomal subunit protein uS14A (89 aa).

Residues 29-62 (AAGDRTALAKLPRDSNPNRLRLRDQTDGRPRGYM) are disordered. Residues 49-58 (RLRDQTDGRP) show a composition bias toward basic and acidic residues.

Belongs to the universal ribosomal protein uS14 family. Part of the 30S ribosomal subunit. Contacts proteins S3 and S10.

Its function is as follows. Binds 16S rRNA, required for the assembly of 30S particles and may also be responsible for determining the conformation of the 16S rRNA at the A site. This Enterococcus faecalis (strain ATCC 700802 / V583) protein is Small ribosomal subunit protein uS14A.